Reading from the N-terminus, the 228-residue chain is Urease accessory protein UreF (228 aa).

It belongs to the UreF family. As to quaternary structure, ureD, UreF and UreG form a complex that acts as a GTP-hydrolysis-dependent molecular chaperone, activating the urease apoprotein by helping to assemble the nickel containing metallocenter of UreC. The UreE protein probably delivers the nickel.

The protein localises to the cytoplasm. Its function is as follows. Required for maturation of urease via the functional incorporation of the urease nickel metallocenter. The chain is Urease accessory protein UreF from Yersinia enterocolitica serotype O:8 / biotype 1B (strain NCTC 13174 / 8081).